The chain runs to 183 residues: ATP-dependent protease subunit HslV (183 aa).

T13 is an active-site residue. Residues G168, C171, and T174 each coordinate Na(+).

This sequence belongs to the peptidase T1B family. HslV subfamily. As to quaternary structure, a double ring-shaped homohexamer of HslV is capped on each side by a ring-shaped HslU homohexamer. The assembly of the HslU/HslV complex is dependent on binding of ATP.

It is found in the cytoplasm. It carries out the reaction ATP-dependent cleavage of peptide bonds with broad specificity.. Allosterically activated by HslU binding. In terms of biological role, protease subunit of a proteasome-like degradation complex believed to be a general protein degrading machinery. This is ATP-dependent protease subunit HslV from Xylella fastidiosa (strain M23).